A 503-amino-acid chain; its full sequence is Methylthioalkylmalate synthase 3, chloroplastic (503 aa).

Residues 1–51 constitute a chloroplast transit peptide; the sequence is MASLLLTSSSMITTSCRSMVLRSGLPIGSSFPSLRLTRPYDKATLFVSCCS. The Pyruvate carboxyltransferase domain maps to 85–359; the sequence is VRVLDTTLRD…YTKIDSRQIM (275 aa).

It belongs to the alpha-IPM synthase/homocitrate synthase family. Requires Mn(2+) as cofactor. In terms of tissue distribution, highly expressed in roots, leaves, and siliques. Lower amounts in stems and flowers.

The protein resides in the plastid. Its subcellular location is the chloroplast. The enzyme catalyses an omega-(methylsulfanyl)-2-oxoalkanoate + acetyl-CoA + H2O = a 2-(omega-methylsulfanyl)alkylmalate + CoA + H(+). Its activity is regulated as follows. Not activated by ATP. Determines the side chain length of aliphatic glucosinolate structures. Accepts all the omega-methylthio-2-oxoalkanoic acids needed to form the known C3 to C8 glucosinolates. Also able to convert pyruvate to citramalate, 2-oxoisovalerate to isopropylmalate, 4-methyl-2-oxopentanoate and 5-methyl-2-oxohexanoate for Leu-derived glucosinolates, 3-methyl-2-oxopentanoate for Ile-derived glucosinolates and phenylpyruvate to phenylethylglucosinolate. This is Methylthioalkylmalate synthase 3, chloroplastic (MAM3) from Arabidopsis thaliana (Mouse-ear cress).